Consider the following 227-residue polypeptide: UPF0173 metal-dependent hydrolase BCAH820_4729 (227 aa).

Belongs to the UPF0173 family.

This Bacillus cereus (strain AH820) protein is UPF0173 metal-dependent hydrolase BCAH820_4729.